The chain runs to 304 residues: Acetylxylan esterase A (304 aa).

Residues 1–19 (MVKLQYLLSILLYAYSCTA) form the signal peptide. S147 serves as the catalytic Charge relay system. N189 carries an N-linked (GlcNAc...) asparagine glycan.

Belongs to the carbohydrate esterase 1 (CE1) family. AxeA subfamily. In terms of assembly, monomer.

It is found in the secreted. The catalysed reaction is Deacetylation of xylans and xylo-oligosaccharides.. The protein operates within glycan degradation; xylan degradation. Its function is as follows. Acetylxylan esterase involved in the hydrolysis of xylan, a major structural heterogeneous polysaccharide found in plant biomass representing the second most abundant polysaccharide in the biosphere, after cellulose. Degrades acetylated xylans by cleaving acetyl side groups from the hetero-xylan backbone. The protein is Acetylxylan esterase A (axeA) of Emericella nidulans (strain FGSC A4 / ATCC 38163 / CBS 112.46 / NRRL 194 / M139) (Aspergillus nidulans).